Reading from the N-terminus, the 392-residue chain is ATP phosphoribosyltransferase regulatory subunit (392 aa).

This sequence belongs to the class-II aminoacyl-tRNA synthetase family. HisZ subfamily. Heteromultimer composed of HisG and HisZ subunits.

It localises to the cytoplasm. It functions in the pathway amino-acid biosynthesis; L-histidine biosynthesis; L-histidine from 5-phospho-alpha-D-ribose 1-diphosphate: step 1/9. Functionally, required for the first step of histidine biosynthesis. May allow the feedback regulation of ATP phosphoribosyltransferase activity by histidine. The polypeptide is ATP phosphoribosyltransferase regulatory subunit (Synechococcus sp. (strain CC9902)).